A 147-amino-acid chain; its full sequence is Small ribosomal subunit protein uS5 (147 aa).

Residues 9–72 (FEEVVVNISR…DNAFKNITTV (64 aa)) enclose the S5 DRBM domain.

Belongs to the universal ribosomal protein uS5 family. In terms of assembly, part of the 30S ribosomal subunit. Contacts proteins S4 and S8.

Its function is as follows. With S4 and S12 plays an important role in translational accuracy. Located at the back of the 30S subunit body where it stabilizes the conformation of the head with respect to the body. The sequence is that of Small ribosomal subunit protein uS5 from Nitratiruptor sp. (strain SB155-2).